Reading from the N-terminus, the 874-residue chain is Alanine--tRNA ligase (874 aa).

The Zn(2+) site is built by histidine 562, histidine 566, cysteine 665, and histidine 669.

This sequence belongs to the class-II aminoacyl-tRNA synthetase family. The cofactor is Zn(2+).

Its subcellular location is the cytoplasm. The catalysed reaction is tRNA(Ala) + L-alanine + ATP = L-alanyl-tRNA(Ala) + AMP + diphosphate. Functionally, catalyzes the attachment of alanine to tRNA(Ala) in a two-step reaction: alanine is first activated by ATP to form Ala-AMP and then transferred to the acceptor end of tRNA(Ala). Also edits incorrectly charged Ser-tRNA(Ala) and Gly-tRNA(Ala) via its editing domain. The sequence is that of Alanine--tRNA ligase from Stutzerimonas stutzeri (strain A1501) (Pseudomonas stutzeri).